Consider the following 96-residue polypeptide: MKLRPLHDRVVIRRLEEEQKTAGGIIIPDTAKEKPVRGEIVAAGHGKILEDGKVRALDVKTGDQVLFAKYAGTEIKVEGEELLVMREDDIMAVIEK.

Belongs to the GroES chaperonin family. As to quaternary structure, heptamer of 7 subunits arranged in a ring. Interacts with the chaperonin GroEL.

The protein localises to the cytoplasm. Functionally, together with the chaperonin GroEL, plays an essential role in assisting protein folding. The GroEL-GroES system forms a nano-cage that allows encapsulation of the non-native substrate proteins and provides a physical environment optimized to promote and accelerate protein folding. GroES binds to the apical surface of the GroEL ring, thereby capping the opening of the GroEL channel. This is Co-chaperonin GroES from Acidithiobacillus ferrooxidans (strain ATCC 23270 / DSM 14882 / CIP 104768 / NCIMB 8455) (Ferrobacillus ferrooxidans (strain ATCC 23270)).